A 1048-amino-acid chain; its full sequence is Ceruloplasmin (1048 aa).

The N-terminal stretch at Met1–Ala19 is a signal peptide. Plastocyanin-like domains are found at residues Lys20–Cys200, Lys209–Cys357, and Asn370–Cys554. Residues Tyr55, Gly64, and Tyr67 each coordinate Na(+). Cu(2+)-binding residues include His120 and His122. His120 provides a ligand contact to O2. Lys128 lines the Ca(2+) pocket. Residue Asn138 is glycosylated (N-linked (GlcNAc...) asparagine). Residues Gln143, Asp146, and Asp147 each contribute to the Ca(2+) site. Cys174 and Cys200 are joined by a disulfide. Positions 180 and 182 each coordinate Cu(2+). O2 is bound at residue His180. Asn227 carries an N-linked (GlcNAc...) asparagine glycan. Ser256 serves as a coordination point for Na(+). The cysteines at positions 276 and 357 are disulfide-linked. Positions 295, 338, and 343 each coordinate Cu(2+). Na(+)-binding residues include Phe408, Gly417, and Tyr420. Cysteines 530 and 554 form a disulfide. N-linked (GlcNAc...) asparagine glycans are attached at residues Asn556 and Asn582. The 149-residue stretch at Arg564 to Cys712 folds into the Plastocyanin-like 4 domain. Ser611 contributes to the Na(+) binding site. Cysteines 631 and 712 form a disulfide. 4 residues coordinate Cu(2+): His650, Cys693, His698, and Met703. Cys693 serves as the catalytic Nucleophile; for glutathione peroxidase activity. Ser716 carries the phosphoserine modification. 2 consecutive Plastocyanin-like domains span residues Gly724–Cys894 and Ser902–Glu1044. The N-linked (GlcNAc...) asparagine glycan is linked to Asn756. Na(+) contacts are provided by Phe761, Gly770, and Tyr773. An intrachain disulfide couples Cys868 to Cys894. Residue Asn920 is glycosylated (N-linked (GlcNAc...) asparagine). Ser949 serves as a coordination point for Na(+). Cu(2+) is bound by residues His977, His980, His982, His1022, Cys1023, His1024, His1028, and Met1033. O2-binding residues include His980 and His982. Residue His1024 participates in O2 binding.

This sequence belongs to the multicopper oxidase family. Found in a complex with MPO and LTF; interacts directly with MPO and LTF, which allows Fe(3+) incorporation into LTF, activation of CP ferroxidase activity and protection of CP antioxidant properties by MPO. Cu(2+) is required as a cofactor. Expressed by the liver and secreted in plasma. Also expressed in the hypothalamus, spleen and uterus. No expression in the cortex, heart, intestine or kidney.

It localises to the secreted. The enzyme catalyses 4 Fe(2+) + O2 + 4 H(+) = 4 Fe(3+) + 2 H2O. It catalyses the reaction 4 Cu(+) + O2 + 4 H(+) = 4 Cu(2+) + 2 H2O. It carries out the reaction a hydroperoxide + 2 glutathione = an alcohol + glutathione disulfide + H2O. The catalysed reaction is 4 nitric oxide + O2 + 2 H2O = 4 nitrite + 4 H(+). The enzyme catalyses 2 glutathione + H2O2 = glutathione disulfide + 2 H2O. Its function is as follows. Multifunctional blue, copper-binding (6-7 atoms per molecule) glycoprotein. It has ferroxidase activity oxidizing Fe(2+) to Fe(3+) without releasing radical oxygen species. It is involved in iron transport across the cell membrane. Copper ions provide a large number of enzymatic activites. Oxidizes highly toxic ferrous ions to the ferric state for further incorporation onto apo-transferrins, catalyzes Cu(+) oxidation and promotes the oxidation of biogenic amines such as norepinephrin and serotonin. Provides Cu(2+) ions for the ascorbate-mediated deaminase degradation of the heparan sulfate chains of GPC1. Has glutathione peroxidase-like activity, can remove both hydrogen peroxide and lipid hydroperoxide in the presence of thiols. Also shows NO-oxidase and NO2 synthase activities that determine endocrine NO homeostasis. The protein is Ceruloplasmin (CP) of Ovis aries (Sheep).